Reading from the N-terminus, the 460-residue chain is L-seryl-tRNA(Sec) selenium transferase (460 aa).

Position 293 is an N6-(pyridoxal phosphate)lysine (Lys-293).

Belongs to the SelA family. Pyridoxal 5'-phosphate serves as cofactor.

The protein resides in the cytoplasm. The catalysed reaction is L-seryl-tRNA(Sec) + selenophosphate + H(+) = L-selenocysteinyl-tRNA(Sec) + phosphate. The protein operates within aminoacyl-tRNA biosynthesis; selenocysteinyl-tRNA(Sec) biosynthesis; selenocysteinyl-tRNA(Sec) from L-seryl-tRNA(Sec) (bacterial route): step 1/1. Its function is as follows. Converts seryl-tRNA(Sec) to selenocysteinyl-tRNA(Sec) required for selenoprotein biosynthesis. The protein is L-seryl-tRNA(Sec) selenium transferase of Pasteurella multocida (strain Pm70).